A 441-amino-acid chain; its full sequence is Deoxyguanosinetriphosphate triphosphohydrolase-like protein (441 aa).

The segment at 1–27 (MTSSVWQERRHGEDKQRRNDHRSPYQR) is disordered. The segment covering 7 to 27 (QERRHGEDKQRRNDHRSPYQR) has biased composition (basic and acidic residues). The 194-residue stretch at 59 to 252 (RLTHSLEVSQ…MELADDIAYA (194 aa)) folds into the HD domain.

This sequence belongs to the dGTPase family. Type 2 subfamily.

The sequence is that of Deoxyguanosinetriphosphate triphosphohydrolase-like protein from Shewanella oneidensis (strain ATCC 700550 / JCM 31522 / CIP 106686 / LMG 19005 / NCIMB 14063 / MR-1).